The chain runs to 245 residues: tRNA pseudouridine synthase A (245 aa).

The Nucleophile role is filled by D52. Y111 is a substrate binding site.

Belongs to the tRNA pseudouridine synthase TruA family. Homodimer.

The catalysed reaction is uridine(38/39/40) in tRNA = pseudouridine(38/39/40) in tRNA. In terms of biological role, formation of pseudouridine at positions 38, 39 and 40 in the anticodon stem and loop of transfer RNAs. The sequence is that of tRNA pseudouridine synthase A from Bradyrhizobium diazoefficiens (strain JCM 10833 / BCRC 13528 / IAM 13628 / NBRC 14792 / USDA 110).